We begin with the raw amino-acid sequence, 107 residues long: Large ribosomal subunit protein uL18c (107 aa).

Belongs to the universal ribosomal protein uL18 family. In terms of assembly, part of the 50S ribosomal subunit; contacts the 5S rRNA.

Its subcellular location is the plastid. The protein resides in the chloroplast. Functionally, binds 5S rRNA, forms part of the central protuberance of the 50S subunit. This is Large ribosomal subunit protein uL18c (rpl18) from Guillardia theta (Cryptophyte).